We begin with the raw amino-acid sequence, 441 residues long: Monodehydroascorbate reductase 3 (441 aa).

FAD-binding positions include 14–17 (GGVA), Glu-41, Arg-48, Lys-53, Ile-96, and 147–148 (RE). Residues 173–179 (GGFLGLE), Glu-197, Arg-203, and Gly-262 contribute to the NAD(+) site. Residue 175–179 (FLGLE) participates in NADP(+) binding. NADP(+)-binding residues include Arg-203 and Gly-262. An FAD-binding site is contributed by Asp-299. 315-316 (EH) contacts NAD(+). Position 315-316 (315-316 (EH)) interacts with NADP(+). Residue Arg-321 coordinates L-ascorbate. FAD is bound at residue Tyr-350. Tyr-350 serves as a coordination point for NAD(+). Residue Tyr-350 participates in NADP(+) binding. An L-ascorbate-binding site is contributed by Arg-352. Position 418 is a phosphoserine (Ser-418).

The protein belongs to the FAD-dependent oxidoreductase family. The cofactor is FAD.

The protein resides in the cytoplasm. The catalysed reaction is 2 monodehydro-L-ascorbate radical + NADH + H(+) = 2 L-ascorbate + NAD(+). Functionally, catalyzes the conversion of monodehydroascorbate to ascorbate, oxidizing NADH in the process. Required for producing sufficient ascorbate to maintain the interaction between Piriformospora indica and Arabidopsis in a mutualistic state. The sequence is that of Monodehydroascorbate reductase 3 from Arabidopsis thaliana (Mouse-ear cress).